The chain runs to 487 residues: Betaine aldehyde dehydrogenase (487 aa).

Positions 27 and 93 each coordinate K(+). An NAD(+)-binding site is contributed by 149–151 (GAW). The active-site Charge relay system is lysine 161. NAD(+) contacts are provided by residues 175–178 (KPSE) and 228–231 (SVPT). Leucine 243 is a K(+) binding site. Glutamate 249 acts as the Proton acceptor in catalysis. Glycine 251, cysteine 283, and glutamate 384 together coordinate NAD(+). The active-site Nucleophile is the cysteine 283. Cysteine 283 is subject to Cysteine sulfenic acid (-SOH). K(+)-binding residues include lysine 454 and glycine 457. Residue glutamate 461 is the Charge relay system of the active site.

This sequence belongs to the aldehyde dehydrogenase family. Dimer of dimers. It depends on K(+) as a cofactor.

The enzyme catalyses betaine aldehyde + NAD(+) + H2O = glycine betaine + NADH + 2 H(+). It functions in the pathway amine and polyamine biosynthesis; betaine biosynthesis via choline pathway; betaine from betaine aldehyde: step 1/1. Functionally, involved in the biosynthesis of the osmoprotectant glycine betaine. Catalyzes the irreversible oxidation of betaine aldehyde to the corresponding acid. This is Betaine aldehyde dehydrogenase from Brucella canis (strain ATCC 23365 / NCTC 10854 / RM-666).